Consider the following 501-residue polypeptide: TNF receptor-associated factor 2 (501 aa).

An N-acetylalanine modification is found at Ala2. A Phosphoserine modification is found at Ser5. Thr7 carries the post-translational modification Phosphothreonine. Ser11 carries the phosphoserine modification. A Phosphothreonine modification is found at Thr22. Residue Lys31 forms a Glycyl lysine isopeptide (Lys-Gly) (interchain with G-Cter in ubiquitin) linkage. Residues 34–73 (CSACRNVLRRPFQAQCGHRYCSFCLASILSSGPQNCAACV) form an RING-type zinc finger. Thr117 carries the post-translational modification Phosphothreonine; by PKC. TRAF-type zinc fingers lie at residues 124 to 180 (CHEG…AHHE) and 177 to 233 (AHHE…EKQQ). The segment at 283–293 (ENIVCVLNREV) is important for interaction with BIRC2 and BIRC3. Residues 299 to 348 (TAEACSRQHRLDQDKIEALSSKVQQLERSIGLKDLAMADLEQKVLEMEAS) adopt a coiled-coil conformation. Residue Lys320 forms a Glycyl lysine isopeptide (Lys-Gly) (interchain with G-Cter in ubiquitin) linkage. In terms of domain architecture, MATH spans 351 to 496 (DGVFIWKISD…DDAIFIKAIV (146 aa)).

The protein belongs to the TNF receptor-associated factor family. A subfamily. In terms of assembly, homotrimer. Heterotrimer with TRAF1. Heterotrimer with TRAF3 (via TRAF domain). The domain containing the RING-type and the first TRAF-type zinc finger can also form homodimers (in vitro). Interacts with TNFRSF1B/TNFR2. Interacts with TNFRSF5/CD40. Interacts with TNFRSF4, TNFRSF7/CD27, TNFRSF8/CD30, TNFRSF9/CD137, TNFRSF11A/RANK, TNFRSF13B/TACI, TNFRSF14, TNFRSF16/NGFR, TNFRSF17/BCMA, TNFRSF18/AITR, TNFRSF19/TROY, TNFRSF19L/RELT and EDAR. Stimulation of TNF-alpha receptor TNFRSF1A leads to the formation of two distinct signaling complexes. Plasma membrane-bound complex I is composed of TNFRSF1A, TRADD, RIPK1, TRAF2 and BIRC2/c-IAP1 or BIRC3 which interacts with CHUCK/IKK-alpha, IKBKB/IKK-beta and IKBKG/IKK-gamma promoting cell survival. Subsequently, TRADD, RIPK1 and TRAF2 dissociate from TNFRSF1A and form cytoplasmic complex II with FADD and caspase CASP8 promoting cell apoptosis. Interacts with TRADD. Identified in a complex with TNFRSF1A, RIPK1 and IKBKB/IKK-beta. Interacts with RIPK2. Interacts with BIRC2 and BIRC3 N-terminus; a single BIRC2 or BIRC3 molecule interacts with a heterotrimer formed by TRAF1 and TRAF2, or a TRAF2 homotrimer. Identified in a complex composed of TRAF2, TRAF3, BIRC2 and BIRC3. Interacts with BIRC2; the interaction promotes BIRC2 stability. Interaction with BIRC2 and/or BIRC3 is essential for ubiquitination of IKBKE, degradation of NFKBIA and activation of NF-kappa-B. Within complex I, phosphorylated TRAF2 interacts (via 'Lys-63'-linked polyubiquitin chains) with CHUCK/IKK-alpha, IKBKB/IKK-beta, IKBKG/IKK-gamma TAB2, TAB3 and TAK1 in response to TNF-alpha stimulation. Within complex I, interacts with UXT isoform 1 (via TPQE motif); the interaction prevents the recruitment of FADD and CASP8/caspase 8 to complex I. Forms a complex composed of TNFRSF8/CD30 or TNFRSF1B/TNFR2, and TRAF1, TRAF2 and E3 ligase TRAIP. Within the complex, interacts with TRAIP; the interaction inhibits TRAF2-mediated NF-kappa B activation. Component of a complex composed of TANK and TBK1. Interacts with TRPC4AP. Interacts with MAP3K1/MEKK1, MAP3K5/ASK1 and MAP3K11/MLK3 in response to TNF-alpha stimulation; the interaction leads to JNK activation and interaction with MAP3K5 is inhibited by PRMT1. Component of a complex composed of MAP3K14/NIK BIRC3 and TRAF3; the interaction leads to BIRC2/3-mediated ubiquitination of TRAF3 upon CD40 engagement in a TRAF2-dependent manner. Interacts with MAP3K14/NIK in response to TNF-alpha stimulation; the interaction leads to NF-kappa B activation. Interacts with PEG3; the interaction may promote TRAF2-mediated NF-kappa B activation. Interacts with HIVEP3; the interaction may inhibit TNF-alpha-TRAF2-mediated NF-kappa B and JNK activation. Interacts with TANK/ITRAF; the interaction prevents interaction between TNFRSF1B/TNFR2 and TRAF2. Interacts with deubiquitinating enzyme CYLD; the interaction results in the deubiquitination and inactivation of TRAF2. Interacts with SIAH2; the interaction leads to TRAF2 ubiquitination and degradation. Interacts with E2 conjugating enzyme UBE2N/Ubc13, E3 ligase ITCH and RNF11 in response to TNF-alpha stimulation. Interacts with ubiquitin-editing enzyme TNFAIP3/A20 in response to TNF-alpha stimulation; the interaction promotes TRAF2 dissociation from UBE2N/Ubc13, ITCH, RNF11 and TAX1BP1 and prevents prolonged TRAF-2 ubiquitination. Interacts with TAX1BP1 in response to TNF-alpha stimulation; the interaction promotes TRAF2 dissociation from UBE2N/Ubc13 and TNFAIP3/A20, and prevents prolonged TRAF-2 ubiquitination. Interacts (via C-terminus) with EIF2AK2/PKR (via the kinase catalytic domain). Interacts with deubiquitinating enzyme USP48. Interacts with PTPN2; probably involved in TNF-mediated signaling. Interacts with Toll-like receptor TLR4/3 adapter TICAM1/TRIF; the interaction may promote TICAM1 ubiquitination. Interacts with kinase/endoribonuclease ERN1/IRE1 and DAB2IP in response to ER stress; the interaction requires DAB2IP. Interacts with ERN1/IRE1 and TAOK3 in response to ER stress; the interaction may promote TRAF2 phosphorylation. Interacts (via zinc fingers) with DAB2IP (via C-terminus PER domain)in response to TNF-alpha stimulation. Interacts with CASP8AP2/FLASH. Interacts with NFATC2IP; the interaction may repress IL-4 production in T cells. Interacts with kinase CDK9. Interacts with sphingosine kinase 1 SPHK1. Interacts with kinase TNIK. Interacts with TRAFD1. Interacts with DNA phosphodiesterase TDP2. Interacts with MAVS/IPS1. Interacts with CARD14. Interacts with Epstein-Barr virus LMP1/BNFL1. Interacts with GPS2. Interacts with XPNPEP3. Interacts with RIPK3. Interacts with RELL2. Interacts with LRRC19. Interacts with GAPDH; promoting TRAF2 ubiquitination. Post-translationally, phosphorylated at several serine residues within the first 128 amino acid residues. Phosphorylated at Thr-117 in response to signaling via TNF and TNFRSF1A. Phosphorylation at Thr-117 is required for 'Lys-63'-linked polyubiquitination, but not for 'Lys-48'-linked polyubiquitination. Phosphorylation at Thr-117 is important for interaction with IKKA and IKKB, activation of IKK and subsequent activation of NF-kappa-B. In terms of processing, undergoes both 'Lys-48'-linked and 'Lys-63'-linked polyubiquitination. Polyubiquitinated via 'Lys-63'-linked ubiquitin in response to TNF signaling; this requires prior phosphorylation at Thr-117. 'Lys-63'-linked polyubiquitination promotes TRAF2-mediated activation of NF-kappa-B. Can be polyubiquitinated at several Lys residues via 'Lys-48'-linked ubiquitin chains in response to TNF signaling, leading to proteasomal degradation. Autoubiquitinated, leading to its subsequent proteasomal degradation. Polyubiquitinated by BIRC2 and SIAH2, leading to its subsequent proteasomal degradation. Deubiquitinated by CYLD, a protease that specifically cleaves 'Lys-63'-linked polyubiquitin chains. Ubiquination is inhibited by LRRC19; inhibits proteasomal degradation. Ubiquitinated at Lys-320 by the SCF(FBXL2) complex, leading to its degradation by the proteasome. Ubiquitinated by E3 ubiquitin-protein ligase complex containing FBXO7; leading to repression of NF-kappa-B signaling.

The protein resides in the cytoplasm. The catalysed reaction is S-ubiquitinyl-[E2 ubiquitin-conjugating enzyme]-L-cysteine + [acceptor protein]-L-lysine = [E2 ubiquitin-conjugating enzyme]-L-cysteine + N(6)-ubiquitinyl-[acceptor protein]-L-lysine.. It participates in protein modification; protein ubiquitination. With respect to regulation, has very low E3 ubiquitin ligase activity in the absence of sphingosine-1-phosphate. E3 ubiquitin ligase activity is strongly activated by cytoplasmic sphingosine-1-phosphate. Its function is as follows. E3 ubiquitin-protein ligase that regulates activation of NF-kappa-B and JNK and plays a central role in the regulation of cell survival and apoptosis. Catalyzes 'Lys-63'-linked ubiquitination of target proteins, such as BIRC3, IKBKE, MLST8, RIPK1 and TICAM1. Is an essential constituent of several E3 ubiquitin-protein ligase complexes, where it promotes the ubiquitination of target proteins by bringing them into contact with other E3 ubiquitin ligases. Regulates BIRC2 and BIRC3 protein levels by inhibiting their autoubiquitination and subsequent degradation; this does not depend on the TRAF2 RING-type zinc finger domain. Plays a role in mediating activation of NF-kappa-B by EIF2AK2/PKR. In complex with BIRC2 or BIRC3, promotes ubiquitination of IKBKE. Acts as a regulator of mTORC1 and mTORC2 assembly by mediating 'Lys-63'-linked ubiquitination of MLST8, thereby inhibiting formation of the mTORC2 complex, while facilitating assembly of the mTORC1 complex. Required for normal antibody isotype switching from IgM to IgG. In Homo sapiens (Human), this protein is TNF receptor-associated factor 2.